A 238-amino-acid chain; its full sequence is Transmembrane protein 127 (238 aa).

N-acetylmethionine is present on M1. Gly residues predominate over residues 1-11 (MYAPGGAGLPG). The disordered stretch occupies residues 1-27 (MYAPGGAGLPGGRRRRSPGGSALPKQP). Phosphoserine is present on S17. 3 helical membrane passes run 96–116 (IAAF…LDVF), 130–150 (AFAH…SYWA), and 169–189 (VYVT…ASIL).

Belongs to the TMEM127 family. As to expression, widely expressed.

It localises to the cell membrane. It is found in the cytoplasm. Functionally, controls cell proliferation acting as a negative regulator of TOR signaling pathway mediated by mTORC1. May act as a tumor suppressor. The protein is Transmembrane protein 127 (TMEM127) of Homo sapiens (Human).